A 403-amino-acid chain; its full sequence is Phosphopentomutase (403 aa).

Residues Asp13, Asp298, His303, Asp339, His340, and His351 each contribute to the Mn(2+) site.

It belongs to the phosphopentomutase family. Mn(2+) is required as a cofactor.

Its subcellular location is the cytoplasm. The catalysed reaction is 2-deoxy-alpha-D-ribose 1-phosphate = 2-deoxy-D-ribose 5-phosphate. It carries out the reaction alpha-D-ribose 1-phosphate = D-ribose 5-phosphate. It participates in carbohydrate degradation; 2-deoxy-D-ribose 1-phosphate degradation; D-glyceraldehyde 3-phosphate and acetaldehyde from 2-deoxy-alpha-D-ribose 1-phosphate: step 1/2. Isomerase that catalyzes the conversion of deoxy-ribose 1-phosphate (dRib-1-P) and ribose 1-phosphate (Rib-1-P) to deoxy-ribose 5-phosphate (dRib-5-P) and ribose 5-phosphate (Rib-5-P), respectively. In Streptococcus gordonii (strain Challis / ATCC 35105 / BCRC 15272 / CH1 / DL1 / V288), this protein is Phosphopentomutase.